A 269-amino-acid chain; its full sequence is 5'-nucleotidase SurE (269 aa).

A divalent metal cation is bound by residues aspartate 11, aspartate 12, serine 43, and asparagine 101.

This sequence belongs to the SurE nucleotidase family. Requires a divalent metal cation as cofactor.

It localises to the cytoplasm. The enzyme catalyses a ribonucleoside 5'-phosphate + H2O = a ribonucleoside + phosphate. Functionally, nucleotidase that shows phosphatase activity on nucleoside 5'-monophosphates. In Synechococcus sp. (strain CC9605), this protein is 5'-nucleotidase SurE.